The primary structure comprises 309 residues: 2-dehydro-3-deoxygluconokinase (309 aa).

Substrate contacts are provided by residues 28-32 (GDTLN), Y88, 102-104 (YWR), and R170. ATP is bound by residues 168–170 (NYR), 228–233 (KRGADS), and 261–264 (AAGD). D264 contributes to the substrate binding site. D264 serves as the catalytic Proton acceptor.

Belongs to the carbohydrate kinase pfkB family.

The catalysed reaction is 2-dehydro-3-deoxy-D-gluconate + ATP = 2-dehydro-3-deoxy-6-phospho-D-gluconate + ADP + H(+). The protein operates within carbohydrate acid metabolism; 2-dehydro-3-deoxy-D-gluconate degradation; D-glyceraldehyde 3-phosphate and pyruvate from 2-dehydro-3-deoxy-D-gluconate: step 1/2. Catalyzes the phosphorylation of 2-keto-3-deoxygluconate (KDG) to produce 2-keto-3-deoxy-6-phosphogluconate (KDPG). This is 2-dehydro-3-deoxygluconokinase (kdgK) from Escherichia coli (strain ATCC 9637 / CCM 2024 / DSM 1116 / LMG 11080 / NBRC 13500 / NCIMB 8666 / NRRL B-766 / W).